Here is a 686-residue protein sequence, read N- to C-terminus: Calponin homology and LIM domain-containing protein (686 aa).

The 106-residue stretch at Glu15 to Ala120 folds into the Calponin-homology (CH) domain. 2 LIM zinc-binding domains span residues Met139 to Leu200 and Asn219 to Lys279. A compositionally biased stretch (basic and acidic residues) spans Lys305–Asp314. The tract at residues Lys305–Lys345 is disordered. Over residues Lys322–Asn333 the composition is skewed to low complexity. 4 LIM zinc-binding domains span residues Gly373–Ser435, Lys437–Tyr495, Asp519–Ser579, and Asp583–Ser658.

In terms of assembly, interacts with limF and rab21.

In terms of biological role, involved in the regulation of phagocytosis. May repress rab21. The sequence is that of Calponin homology and LIM domain-containing protein (ChLim) from Dictyostelium discoideum (Social amoeba).